Reading from the N-terminus, the 209-residue chain is Ribosomal RNA large subunit methyltransferase E (209 aa).

Residues G63, W65, D83, D99, and D124 each contribute to the S-adenosyl-L-methionine site. The active-site Proton acceptor is the K164.

The protein belongs to the class I-like SAM-binding methyltransferase superfamily. RNA methyltransferase RlmE family.

Its subcellular location is the cytoplasm. It catalyses the reaction uridine(2552) in 23S rRNA + S-adenosyl-L-methionine = 2'-O-methyluridine(2552) in 23S rRNA + S-adenosyl-L-homocysteine + H(+). Specifically methylates the uridine in position 2552 of 23S rRNA at the 2'-O position of the ribose in the fully assembled 50S ribosomal subunit. The protein is Ribosomal RNA large subunit methyltransferase E of Baumannia cicadellinicola subsp. Homalodisca coagulata.